The sequence spans 552 residues: Urocanate hydratase (552 aa).

NAD(+)-binding positions include 48–49 (GG), glutamine 126, 172–174 (GMG), aspartate 192, 238–239 (NA), 259–263 (QTSAH), 268–269 (YL), and tyrosine 317. The active site involves cysteine 405. Glycine 487 provides a ligand contact to NAD(+).

The protein belongs to the urocanase family. NAD(+) is required as a cofactor.

It is found in the cytoplasm. It carries out the reaction 4-imidazolone-5-propanoate = trans-urocanate + H2O. It participates in amino-acid degradation; L-histidine degradation into L-glutamate; N-formimidoyl-L-glutamate from L-histidine: step 2/3. Its function is as follows. Catalyzes the conversion of urocanate to 4-imidazolone-5-propionate. The polypeptide is Urocanate hydratase (Streptomyces griseus subsp. griseus (strain JCM 4626 / CBS 651.72 / NBRC 13350 / KCC S-0626 / ISP 5235)).